The chain runs to 307 residues: N-acetylmuramic acid 6-phosphate etherase (307 aa).

The 164-residue stretch at Ile-62–Lys-225 folds into the SIS domain. Residue Glu-90 is the Proton donor of the active site. Glu-121 is a catalytic residue.

Belongs to the GCKR-like family. MurNAc-6-P etherase subfamily. Homodimer.

It catalyses the reaction N-acetyl-D-muramate 6-phosphate + H2O = N-acetyl-D-glucosamine 6-phosphate + (R)-lactate. It functions in the pathway amino-sugar metabolism; 1,6-anhydro-N-acetylmuramate degradation. It participates in amino-sugar metabolism; N-acetylmuramate degradation. The protein operates within cell wall biogenesis; peptidoglycan recycling. Functionally, specifically catalyzes the cleavage of the D-lactyl ether substituent of MurNAc 6-phosphate, producing GlcNAc 6-phosphate and D-lactate. Together with AnmK, is also required for the utilization of anhydro-N-acetylmuramic acid (anhMurNAc) either imported from the medium or derived from its own cell wall murein, and thus plays a role in cell wall recycling. The chain is N-acetylmuramic acid 6-phosphate etherase from Mesorhizobium japonicum (strain LMG 29417 / CECT 9101 / MAFF 303099) (Mesorhizobium loti (strain MAFF 303099)).